The chain runs to 458 residues: uncharacterized protein (458 aa).

Positions Met-1–Ala-10 are enriched in basic and acidic residues. A disordered region spans residues Met-1–Ser-20. The TRAM domain occupies Val-23–Glu-84. Residues Cys-97, Cys-105, Cys-108, and Cys-193 each coordinate [4Fe-4S] cluster. Positions 287, 316, 340, and 384 each coordinate S-adenosyl-L-methionine. The active-site Nucleophile is Cys-411.

This sequence belongs to the class I-like SAM-binding methyltransferase superfamily. RNA M5U methyltransferase family.

This is an uncharacterized protein from Streptomyces coelicolor (strain ATCC BAA-471 / A3(2) / M145).